We begin with the raw amino-acid sequence, 482 residues long: Anthranilate synthase component 1 (482 aa).

L-tryptophan is bound by residues serine 47 and 267 to 269; that span reads PYM. 302-303 contacts chorismate; it reads GT. Position 329 (glutamate 329) interacts with Mg(2+). Residues tyrosine 417, arginine 437, 451–453, and glycine 453 contribute to the chorismate site; that span reads GGG. Glutamate 466 provides a ligand contact to Mg(2+).

It belongs to the anthranilate synthase component I family. In terms of assembly, heterotetramer consisting of two non-identical subunits: a beta subunit (TrpG) and a large alpha subunit (TrpE). It depends on Mg(2+) as a cofactor.

The enzyme catalyses chorismate + L-glutamine = anthranilate + pyruvate + L-glutamate + H(+). It participates in amino-acid biosynthesis; L-tryptophan biosynthesis; L-tryptophan from chorismate: step 1/5. Its activity is regulated as follows. Feedback inhibited by tryptophan. Functionally, part of a heterotetrameric complex that catalyzes the two-step biosynthesis of anthranilate, an intermediate in the biosynthesis of L-tryptophan. In the first step, the glutamine-binding beta subunit (TrpG) of anthranilate synthase (AS) provides the glutamine amidotransferase activity which generates ammonia as a substrate that, along with chorismate, is used in the second step, catalyzed by the large alpha subunit of AS (TrpE) to produce anthranilate. In the absence of TrpG, TrpE can synthesize anthranilate directly from chorismate and high concentrations of ammonia. This Spirochaeta aurantia protein is Anthranilate synthase component 1 (trpE).